A 1072-amino-acid chain; its full sequence is DNA-directed RNA polymerase subunit beta (1072 aa).

Belongs to the RNA polymerase beta chain family. As to quaternary structure, in plastids the minimal PEP RNA polymerase catalytic core is composed of four subunits: alpha, beta, beta', and beta''. When a (nuclear-encoded) sigma factor is associated with the core the holoenzyme is formed, which can initiate transcription.

The protein localises to the plastid. It localises to the chloroplast. The enzyme catalyses RNA(n) + a ribonucleoside 5'-triphosphate = RNA(n+1) + diphosphate. In terms of biological role, DNA-dependent RNA polymerase catalyzes the transcription of DNA into RNA using the four ribonucleoside triphosphates as substrates. This Cycas taitungensis (Prince sago) protein is DNA-directed RNA polymerase subunit beta.